Consider the following 535-residue polypeptide: Inositol 1,4,5-trisphosphate receptor-interacting protein-like 2 (535 aa).

The N-terminal stretch at methionine 1 to alanine 38 is a signal peptide. Residues glutamate 39–glycine 43 lie on the Extracellular side of the membrane. A helical membrane pass occupies residues valine 44–leucine 64. Topologically, residues arginine 65–proline 535 are cytoplasmic. Serine 139 carries the post-translational modification Phosphoserine.

This sequence belongs to the ITPRIP family.

It is found in the membrane. The protein is Inositol 1,4,5-trisphosphate receptor-interacting protein-like 2 (ITPRIPL2) of Homo sapiens (Human).